The chain runs to 600 residues: Methionine--tRNA ligase (600 aa).

The 'HIGH' region signature appears at 12-22; it reads PYANGPRHIGH. C144, C147, C157, and C160 together coordinate Zn(2+). The 'KMSKS' region motif lies at 351 to 355; that stretch reads KFSSS. S354 provides a ligand contact to ATP.

The protein belongs to the class-I aminoacyl-tRNA synthetase family. MetG type 1 subfamily. Monomer. Requires Zn(2+) as cofactor.

The protein localises to the cytoplasm. It carries out the reaction tRNA(Met) + L-methionine + ATP = L-methionyl-tRNA(Met) + AMP + diphosphate. Functionally, is required not only for elongation of protein synthesis but also for the initiation of all mRNA translation through initiator tRNA(fMet) aminoacylation. The polypeptide is Methionine--tRNA ligase (Chloroflexus aurantiacus (strain ATCC 29364 / DSM 637 / Y-400-fl)).